Consider the following 341-residue polypeptide: Methionine import ATP-binding protein MetN 1 (341 aa).

An ABC transporter domain is found at 2 to 241 (IEFRQVSKTF…PKTTIAQNFV (240 aa)). 38 to 45 (GYSGAGKS) contributes to the ATP binding site.

This sequence belongs to the ABC transporter superfamily. Methionine importer (TC 3.A.1.24) family. In terms of assembly, the complex is composed of two ATP-binding proteins (MetN), two transmembrane proteins (MetI) and a solute-binding protein (MetQ).

It is found in the cell membrane. It carries out the reaction L-methionine(out) + ATP + H2O = L-methionine(in) + ADP + phosphate + H(+). It catalyses the reaction D-methionine(out) + ATP + H2O = D-methionine(in) + ADP + phosphate + H(+). Functionally, part of the ABC transporter complex MetNIQ involved in methionine import. Responsible for energy coupling to the transport system. The chain is Methionine import ATP-binding protein MetN 1 from Staphylococcus aureus (strain MW2).